Consider the following 485-residue polypeptide: uncharacterized protein (485 aa).

Helical transmembrane passes span 79–99 (LVTLGATLYTLGILFGNLIFA), 117–137 (VFALLQIPIALSVNLAMFLVF), 139–159 (FFSGLFGSVGLSNGSGSLADL), 170–190 (VIYFTVLSIGPGIAPIISGFI), 199–219 (WEFWILLILSGFNLFWAFLLL), 275–295 (ILICVACTIGSIYGMINLVLI), 313–333 (GLMYISITLGLFSAVFIAMPI), 355–375 (LPMGFIGITLFEIGILLFGWT), 380–400 (IFWFVPTIGSAIMGGGYIMTS), 421–441 (GVKIFQLLLGAIFPLFAESLF), and 448–468 (WGCTLLAFILLACGCSLPILF).

The protein belongs to the major facilitator superfamily. CAR1 family.

It is found in the golgi apparatus. The protein resides in the membrane. This is an uncharacterized protein from Schizosaccharomyces pombe (strain 972 / ATCC 24843) (Fission yeast).